Consider the following 358-residue polypeptide: Protein ttm-2 (358 aa).

It belongs to the arrestin family.

In terms of biological role, involved in resistance to B.thuringiensis pore-forming toxin Cry5B downstream of the sek-1 and pmk-1 MAPK kinase pathway. The polypeptide is Protein ttm-2 (Caenorhabditis elegans).